Reading from the N-terminus, the 607-residue chain is Rap1 GTPase-GDP dissociation stimulator 1-A (607 aa).

ARM repeat units follow at residues Glu79–Tyr118, Asp170–Glu211, Asp347–Ile390, Pro391–Asp431, and Ser479–Ala519.

As to quaternary structure, interacts with ralB. Probably interacts with the post-translationally isoprenylated (geranyl-geranylation) forms of ral proteins. Interacts with both GDP-bound and GTP-bound forms of ralA, but interaction is much stronger with ralA-GDP. Weakly expressed in adult tissues with highest levels found in spleen, kidney, skin and A6 cells.

Its subcellular location is the cytoplasm. The protein resides in the cytosol. It is found in the endoplasmic reticulum. It localises to the mitochondrion. Stimulates GDP/GTP exchange reaction of a group of small GTP-binding proteins (G proteins) including Rap1a/Rap1b, RhoA, RhoB and KRas, by stimulating the dissociation of GDP from and the subsequent binding of GTP to each small G protein. The protein is Rap1 GTPase-GDP dissociation stimulator 1-A (rap1gds1-a) of Xenopus laevis (African clawed frog).